The primary structure comprises 371 residues: Partitioning defective 6 homolog beta (371 aa).

2 positions are modified to phosphoserine: serine 10 and serine 11. One can recognise a PB1 domain in the interval 16–96 (TMEVKSKFGA…PLLRIFIQKK (81 aa)). Residues 126 to 253 (RKKPHIVISM…ITVRPANQRN (128 aa)) are interaction with PARD3 and CDC42. One can recognise a Pseudo-CRIB domain in the interval 133–150 (ISMPQDFRPVSSIIDVDI). Positions 157–250 (RVRLYKYGTE…NLIITVRPAN (94 aa)) constitute a PDZ domain. 2 disordered regions span residues 253-273 (NNVV…DNSL) and 326-371 (FESG…IITL). Over residues 326-340 (FESGQNGFSPPQDTS) the composition is skewed to polar residues. Residues 352-363 (LESRAPDQKLLE) show a composition bias toward basic and acidic residues.

This sequence belongs to the PAR6 family. In terms of assembly, interacts with PARD3. Interacts with GTP-bound forms of CDC42, RHOQ/TC10 and RAC1. Interacts with the N-terminal part of PRKCI and PRKCZ. Part of a complex with PARD3, CDC42 or RAC1 and PRKCI or PRKCZ. Part of a complex with LLGL1 and PRKCI. Interacts with ALS2CR19. Interacts with ECT2. Interacts with PALS1. In terms of tissue distribution, expressed in pancreas and in both adult and fetal kidney. Weakly expressed in placenta and lung. Not expressed in other tissues.

It localises to the cytoplasm. The protein localises to the cell membrane. It is found in the cell junction. Its subcellular location is the tight junction. Its function is as follows. Adapter protein involved in asymmetrical cell division and cell polarization processes. Probably involved in formation of epithelial tight junctions. Association with PARD3 may prevent the interaction of PARD3 with F11R/JAM1, thereby preventing tight junction assembly. The PARD6-PARD3 complex links GTP-bound Rho small GTPases to atypical protein kinase C proteins. This Mus musculus (Mouse) protein is Partitioning defective 6 homolog beta (Pard6b).